A 153-amino-acid chain; its full sequence is Myosin regulatory light chain (153 aa).

A Blocked amino end (Ala) modification is found at A1. EF-hand domains follow at residues 15 to 50 (KQIQ…LGRT) and 81 to 116 (DSEE…MGNN). The Ca(2+) site is built by D28, D30, D32, and D39.

In molluscan muscle, calcium regulation is associated with myosin rather than with actin. Muscle myosin contains two types of light chains: the catalytic light chain, essential for ATPase activity, and the regulatory light chain, a calcium-binding protein responsible for Ca(2+) dependent binding and Ca(2+) dependent Mg-ATPase activity. The protein is Myosin regulatory light chain of Patinopecten sp. (Scallop).